The primary structure comprises 148 residues: Ubiquitin-conjugating enzyme E2 4 (148 aa).

A disordered region spans residues 1-22 (MSSSKRIAKELSDLERDPPTSC). A UBC core domain is found at 2 to 148 (SSSKRIAKEL…AREWTKKYAV (147 aa)). Basic and acidic residues predominate over residues 7–18 (IAKELSDLERDP). Ser-12 is modified (phosphoserine). The Glycyl thioester intermediate role is filled by Cys-86. Residue Lys-91 forms a Glycyl lysine isopeptide (Lys-Gly) (interchain with G-Cter in ubiquitin) linkage.

The protein belongs to the ubiquitin-conjugating enzyme family. Interacts with TUL1. The N-terminus is blocked.

The catalysed reaction is S-ubiquitinyl-[E1 ubiquitin-activating enzyme]-L-cysteine + [E2 ubiquitin-conjugating enzyme]-L-cysteine = [E1 ubiquitin-activating enzyme]-L-cysteine + S-ubiquitinyl-[E2 ubiquitin-conjugating enzyme]-L-cysteine.. It functions in the pathway protein modification; protein ubiquitination. Its function is as follows. E2 ubiquitin-conjugating enzyme that catalyzes the covalent attachment of ubiquitin to other proteins. Mediates the selective degradation of short-lived and abnormal proteins. Mediates ubiquitination of PEX5. In Saccharomyces cerevisiae (strain ATCC 204508 / S288c) (Baker's yeast), this protein is Ubiquitin-conjugating enzyme E2 4.